Here is a 297-residue protein sequence, read N- to C-terminus: Ubiquinol oxidase 2, mitochondrial (297 aa).

The tract at residues 17-43 is disordered; it reads VALNDKQHDKKVENGGAAASGGGDGGD. A helical membrane pass occupies residues 122-142; sequence AMMLETVAAVPGMVGGMLLHC. Fe cation-binding residues include glutamate 126, glutamate 165, and histidine 168. The chain crosses the membrane as a helical span at residues 184–204; sequence ALVFAVQGVFINAYFVTYLLS. Fe cation contacts are provided by glutamate 216, glutamate 267, and histidine 270.

It belongs to the alternative oxidase family. Homodimer; disulfide-linked. Fe cation is required as a cofactor.

The protein resides in the mitochondrion inner membrane. The catalysed reaction is 2 a ubiquinol + O2 = 2 a ubiquinone + 2 H2O. Catalyzes the cyanide-resistant oxidation of ubiquinol and the reduction of molecular oxygen to water, but does not translocate protons and consequently is not linked to oxidative phosphorylation. May increase respiration when the cytochrome respiratory pathway is restricted, or in response to low temperatures. This is Ubiquinol oxidase 2, mitochondrial (AOX2) from Nicotiana tabacum (Common tobacco).